The sequence spans 504 residues: Ammonium transporter 1 member 4 (504 aa).

12 consecutive transmembrane segments (helical) span residues 12–32 (LIPL…AEYI), 55–75 (LLFS…LCAG), 90–110 (VIDA…FAFG), 136–156 (YFLY…GSIA), 161–181 (FVAY…IVSH), 207–227 (FAGS…GALI), 251–271 (LVVL…PGSF), 292–314 (AVGR…TLFG), 318–338 (IDGY…FAAI), 344–364 (VVEP…LMGC), 377–397 (LEAA…TGLF), and 430–450 (VVQI…LFFI). Thr471 is modified (phosphothreonine).

It belongs to the ammonia transporter channel (TC 1.A.11.2) family. In terms of tissue distribution, specifically expressed in pollen grains and tubes.

The protein localises to the cell membrane. Its function is as follows. High affinity ammonium transporter in the plasma membrane. The protein is Ammonium transporter 1 member 4 (AMT1-4) of Arabidopsis thaliana (Mouse-ear cress).